A 239-amino-acid polypeptide reads, in one-letter code: UDP-2,3-diacylglucosamine hydrolase (239 aa).

Residues Asp9, His11, Asp42, Asn80, and His115 each contribute to the Mn(2+) site. 80–81 contacts substrate; that stretch reads NR. Asp123, Ser161, Lys165, Lys168, and His196 together coordinate substrate. 2 residues coordinate Mn(2+): His196 and His198.

It belongs to the LpxH family. The cofactor is Mn(2+).

The protein resides in the cell inner membrane. The catalysed reaction is UDP-2-N,3-O-bis[(3R)-3-hydroxytetradecanoyl]-alpha-D-glucosamine + H2O = 2-N,3-O-bis[(3R)-3-hydroxytetradecanoyl]-alpha-D-glucosaminyl 1-phosphate + UMP + 2 H(+). The protein operates within glycolipid biosynthesis; lipid IV(A) biosynthesis; lipid IV(A) from (3R)-3-hydroxytetradecanoyl-[acyl-carrier-protein] and UDP-N-acetyl-alpha-D-glucosamine: step 4/6. Functionally, hydrolyzes the pyrophosphate bond of UDP-2,3-diacylglucosamine to yield 2,3-diacylglucosamine 1-phosphate (lipid X) and UMP by catalyzing the attack of water at the alpha-P atom. Involved in the biosynthesis of lipid A, a phosphorylated glycolipid that anchors the lipopolysaccharide to the outer membrane of the cell. The chain is UDP-2,3-diacylglucosamine hydrolase from Pasteurella multocida (strain Pm70).